We begin with the raw amino-acid sequence, 203 residues long: Cold-regulated 413 plasma membrane protein 2 (203 aa).

Residues 1-43 lie on the Extracellular side of the membrane; the sequence is MGRMDYLAMKTDDVDTVALVNSDMEELKVAAKKLFSDVSKLGG. A helical membrane pass occupies residues 44 to 64; the sequence is LGFGVSFLKFLASFAAIYLLI. Topologically, residues 65–74 are cytoplasmic; it reads LDRTNWKTKM. Residues 75-95 traverse the membrane as a helical segment; it reads LTSLLIPYIFLSLPSVIFNFL. Residues 96-98 lie on the Extracellular side of the membrane; the sequence is SGD. A helical membrane pass occupies residues 99–119; it reads VGKWIAFVAVVLRLFFPKHFP. A topological domain (cytoplasmic) is located at residue Asp120. The helical transmembrane segment at 121 to 141 threads the bilayer; sequence WLEMPGSLILLLVVSPHFLAH. Residues 142 to 144 lie on the Extracellular side of the membrane; sequence HIR. A helical transmembrane segment spans residues 145 to 165; the sequence is GTWIGTVISLFIGCYLLQEHI. Residues 166 to 179 are Cytoplasmic-facing; the sequence is RASGGFRNSFTQPR. A helical transmembrane segment spans residues 180–200; that stretch reads GVSNTLGIILLLVYPVWALIV. Residues 201–203 lie on the Extracellular side of the membrane; the sequence is RVM.

This sequence belongs to the Cold-regulated 413 protein family.

The protein resides in the cell membrane. This chain is Cold-regulated 413 plasma membrane protein 2 (COR413PM2), found in Arabidopsis thaliana (Mouse-ear cress).